Here is a 94-residue protein sequence, read N- to C-terminus: Co-chaperonin GroES (94 aa).

It belongs to the GroES chaperonin family. As to quaternary structure, heptamer of 7 subunits arranged in a ring. Interacts with the chaperonin GroEL.

Its subcellular location is the cytoplasm. Together with the chaperonin GroEL, plays an essential role in assisting protein folding. The GroEL-GroES system forms a nano-cage that allows encapsulation of the non-native substrate proteins and provides a physical environment optimized to promote and accelerate protein folding. GroES binds to the apical surface of the GroEL ring, thereby capping the opening of the GroEL channel. The polypeptide is Co-chaperonin GroES (Lactobacillus acidophilus (strain ATCC 700396 / NCK56 / N2 / NCFM)).